The primary structure comprises 329 residues: Beta-ketoacyl-[acyl-carrier-protein] synthase III (329 aa).

Residues cysteine 114 and histidine 255 contribute to the active site. The segment at 256–260 (QANQR) is ACP-binding. Residue asparagine 285 is part of the active site.

Belongs to the thiolase-like superfamily. FabH family. As to quaternary structure, homodimer.

The protein localises to the cytoplasm. It catalyses the reaction malonyl-[ACP] + acetyl-CoA + H(+) = 3-oxobutanoyl-[ACP] + CO2 + CoA. Its pathway is lipid metabolism; fatty acid biosynthesis. In terms of biological role, catalyzes the condensation reaction of fatty acid synthesis by the addition to an acyl acceptor of two carbons from malonyl-ACP. Catalyzes the first condensation reaction which initiates fatty acid synthesis and may therefore play a role in governing the total rate of fatty acid production. Possesses both acetoacetyl-ACP synthase and acetyl transacylase activities. Its substrate specificity determines the biosynthesis of branched-chain and/or straight-chain of fatty acids. The sequence is that of Beta-ketoacyl-[acyl-carrier-protein] synthase III from Thermosynechococcus vestitus (strain NIES-2133 / IAM M-273 / BP-1).